We begin with the raw amino-acid sequence, 239 residues long: Purine nucleoside phosphorylase DeoD-type (239 aa).

Residue histidine 5 participates in a purine D-ribonucleoside binding. Residues glycine 21, arginine 25, arginine 44, and 88 to 91 (RVGS) each bind phosphate. A purine D-ribonucleoside-binding positions include 180–182 (EME) and 204–205 (SD). Catalysis depends on aspartate 205, which acts as the Proton donor.

This sequence belongs to the PNP/UDP phosphorylase family. As to quaternary structure, homohexamer; trimer of homodimers.

It carries out the reaction a purine D-ribonucleoside + phosphate = a purine nucleobase + alpha-D-ribose 1-phosphate. It catalyses the reaction a purine 2'-deoxy-D-ribonucleoside + phosphate = a purine nucleobase + 2-deoxy-alpha-D-ribose 1-phosphate. In terms of biological role, catalyzes the reversible phosphorolytic breakdown of the N-glycosidic bond in the beta-(deoxy)ribonucleoside molecules, with the formation of the corresponding free purine bases and pentose-1-phosphate. This Yersinia pseudotuberculosis serotype O:1b (strain IP 31758) protein is Purine nucleoside phosphorylase DeoD-type.